A 69-amino-acid chain; its full sequence is Large ribosomal subunit protein bL28 (69 aa).

This sequence belongs to the bacterial ribosomal protein bL28 family.

The sequence is that of Large ribosomal subunit protein bL28 from Nitratidesulfovibrio vulgaris (strain DSM 19637 / Miyazaki F) (Desulfovibrio vulgaris).